The chain runs to 118 residues: MVKPTGPTDVNVRKLIRQLEKTKRPIFKYIAELLSKPKRRKKHFVVNLWKIEKHSNDGDTIIVPGKVLGSGELTKDVKVVALSFSQTALEKLKDKAIYLENFVEQAKDKKLPNTKILI.

This sequence belongs to the eukaryotic ribosomal protein eL18 family.

In Nanoarchaeum equitans (strain Kin4-M), this protein is Large ribosomal subunit protein eL18.